Consider the following 739-residue polypeptide: Nuclear pore complex protein NUP62 (739 aa).

Repeat copies occupy residues 6–7 (FG), 17–18 (FG), 50–51 (FG), 52–53 (FG), 68–69 (FG), 70–71 (FG), 78–79 (FG), 80–81 (FG), 91–92 (FG), 93–94 (FG), 108–109 (FG), 110–111 (FG), 124–125 (FG), 141–142 (FG), 159–160 (FG), 174–175 (FG), 186–187 (FG), 207–208 (FG), and 221–222 (FG). Residues 6-450 (FGQSNSVGGF…AATFSTTGFG (445 aa)) are 26 X 2 AA repeats of F-G. Positions 18-67 (GSSSATNSSSASSTTSPLSFSFNQSSNPSSTGFGFGSSVSSTPASSTTPS) are disordered. A compositionally biased stretch (low complexity) spans 79–218 (GFGSSASSST…ASSSAATSTS (140 aa)). Residues 79-245 (GFGSSASSST…VASSAPGSSS (167 aa)) are disordered. The segment covering 232-245 (PSFSVASSAPGSSS) has biased composition (low complexity). 5 repeat units span residues 248–249 (FG), 271–272 (FG), 280–281 (FG), 308–309 (FG), and 366–367 (FG). 3 disordered regions span residues 281-329 (GSSS…ASPF), 341-366 (TASS…SFSF), and 399-418 (TTTS…SAPA). 2 tandem repeats follow at residues 426–427 (FG) and 449–450 (FG). The disordered stretch occupies residues 471 to 533 (KTSTPASSSQ…AVAPVAGSPK (63 aa)). Residues 472-519 (TSTPASSSQPQTTSPAFSFSLPSSTSTTAPATSSATTTQTTLVVPSSS) show a composition bias toward low complexity. Positions 584–674 (RLEIEVAKVV…IRSIIQSVNA (91 aa)) form a coiled coil.

This sequence belongs to the nucleoporin NSP1/NUP62 family. Part of the nuclear pore complex (NPC). The NPC has an eight-fold symmetrical structure comprising a central transport channel and two rings, the cytoplasmic and nuclear rings, to which eight filaments are attached. The cytoplasmic filaments have loose ends, while the nuclear filaments are joined in a distal ring, forming a nuclear basket. NPCs are highly dynamic in configuration and composition, and can be devided in 3 subcomplexes, the NUP62 subcomplex, the NUP107-160 subcomplex and the NUP93 subcomplex, containing approximately 30 different nucleoporin proteins. Interacts with NUP58 and the importin KPNB1.

It is found in the nucleus envelope. Its subcellular location is the nucleus. It localises to the nuclear pore complex. The polypeptide is Nuclear pore complex protein NUP62 (Arabidopsis thaliana (Mouse-ear cress)).